A 129-amino-acid chain; its full sequence is Histone H2A type 2-C (129 aa).

The disordered stretch occupies residues 1–22 (MSGRGKQGGKARAKAKSRSSRA). N-acetylserine is present on S2. S2 bears the Phosphoserine; by RPS6KA5 mark. R4 bears the Citrulline; alternate mark. R4 carries the post-translational modification Symmetric dimethylarginine; by PRMT5; alternate. An N6-(2-hydroxyisobutyryl)lysine; alternate mark is found at K6 and K10. At K6 the chain carries N6-acetyllysine; alternate. Residues 7–19 (QGGKARAKAKSRS) show a composition bias toward basic residues. At K10 the chain carries N6-lactoyllysine; alternate. K10 carries the N6-succinyllysine; alternate modification. Glycyl lysine isopeptide (Lys-Gly) (interchain with G-Cter in ubiquitin) cross-links involve residues K14 and K16. An N6-(2-hydroxyisobutyryl)lysine; alternate modification is found at K37. K37 is modified (N6-(beta-hydroxybutyryl)lysine; alternate). K37 bears the N6-crotonyllysine; alternate mark. N6-(2-hydroxyisobutyryl)lysine occurs at positions 75 and 76. An N6-(2-hydroxyisobutyryl)lysine; alternate modification is found at K96. K96 bears the N6-succinyllysine; alternate mark. K96 carries the post-translational modification N6-glutaryllysine; alternate. K100 is modified (N6-glutaryllysine). Q105 bears the N5-methylglutamine mark. K119 is modified (N6-(2-hydroxyisobutyryl)lysine; alternate). N6-crotonyllysine; alternate is present on residues K119 and K120. N6-glutaryllysine; alternate occurs at positions 119 and 120. Residue K120 forms a Glycyl lysine isopeptide (Lys-Gly) (interchain with G-Cter in ubiquitin); alternate linkage. T121 is modified (phosphothreonine; by DCAF1). The residue at position 123 (S123) is a Phosphoserine. K125 carries the N6-crotonyllysine modification.

Belongs to the histone H2A family. The nucleosome is a histone octamer containing two molecules each of H2A, H2B, H3 and H4 assembled in one H3-H4 heterotetramer and two H2A-H2B heterodimers. The octamer wraps approximately 147 bp of DNA. Deiminated on Arg-4 in granulocytes upon calcium entry. In terms of processing, monoubiquitination of Lys-120 (H2AK119Ub) by RING1, TRIM37 and RNF2/RING2 complex gives a specific tag for epigenetic transcriptional repression and participates in X chromosome inactivation of female mammals. It is involved in the initiation of both imprinted and random X inactivation. Ubiquitinated H2A is enriched in inactive X chromosome chromatin. Ubiquitination of H2A functions downstream of methylation of 'Lys-27' of histone H3 (H3K27me). H2AK119Ub by RNF2/RING2 can also be induced by ultraviolet and may be involved in DNA repair. Following DNA double-strand breaks (DSBs), it is ubiquitinated through 'Lys-63' linkage of ubiquitin moieties by the E2 ligase UBE2N and the E3 ligases RNF8 and RNF168, leading to the recruitment of repair proteins to sites of DNA damage. Ubiquitination at Lys-14 and Lys-16 (H2AK13Ub and H2AK15Ub, respectively) in response to DNA damage is initiated by RNF168 that mediates monoubiquitination at these 2 sites, and 'Lys-63'-linked ubiquitin are then conjugated to monoubiquitin; RNF8 is able to extend 'Lys-63'-linked ubiquitin chains in vitro. H2AK119Ub and ionizing radiation-induced 'Lys-63'-linked ubiquitination (H2AK13Ub and H2AK15Ub) are distinct events. Post-translationally, phosphorylation on Ser-2 (H2AS1ph) is enhanced during mitosis. Phosphorylation on Ser-2 by RPS6KA5/MSK1 directly represses transcription. Acetylation of H3 inhibits Ser-2 phosphorylation by RPS6KA5/MSK1. Phosphorylation at Thr-121 (H2AT120ph) by DCAF1 is present in the regulatory region of many tumor suppresor genes and down-regulates their transcription. Symmetric dimethylation on Arg-4 by the PRDM1/PRMT5 complex may play a crucial role in the germ-cell lineage. In terms of processing, glutamine methylation at Gln-105 (H2AQ104me) by FBL is specifically dedicated to polymerase I. It is present at 35S ribosomal DNA locus and impairs binding of the FACT complex. Post-translationally, crotonylation (Kcr) is specifically present in male germ cells and marks testis-specific genes in post-meiotic cells, including X-linked genes that escape sex chromosome inactivation in haploid cells. Crotonylation marks active promoters and enhancers and confers resistance to transcriptional repressors. It is also associated with post-meiotically activated genes on autosomes. Lactylated in macrophages by EP300/P300 by using lactoyl-CoA directly derived from endogenous or exogenous lactate, leading to stimulates gene transcription.

It is found in the nucleus. The protein resides in the chromosome. Core component of nucleosome. Nucleosomes wrap and compact DNA into chromatin, limiting DNA accessibility to the cellular machineries which require DNA as a template. Histones thereby play a central role in transcription regulation, DNA repair, DNA replication and chromosomal stability. DNA accessibility is regulated via a complex set of post-translational modifications of histones, also called histone code, and nucleosome remodeling. The chain is Histone H2A type 2-C from Bos taurus (Bovine).